A 153-amino-acid chain; its full sequence is Arginine repressor (153 aa).

This sequence belongs to the ArgR family.

It is found in the cytoplasm. The protein operates within amino-acid biosynthesis; L-arginine biosynthesis [regulation]. In terms of biological role, regulates arginine biosynthesis genes. This Actinobacillus pleuropneumoniae serotype 7 (strain AP76) protein is Arginine repressor.